The primary structure comprises 464 residues: ATP synthase subunit beta (464 aa).

153 to 160 (GGAGVGKT) lines the ATP pocket.

The protein belongs to the ATPase alpha/beta chains family. As to quaternary structure, F-type ATPases have 2 components, CF(1) - the catalytic core - and CF(0) - the membrane proton channel. CF(1) has five subunits: alpha(3), beta(3), gamma(1), delta(1), epsilon(1). CF(0) has three main subunits: a(1), b(2) and c(9-12). The alpha and beta chains form an alternating ring which encloses part of the gamma chain. CF(1) is attached to CF(0) by a central stalk formed by the gamma and epsilon chains, while a peripheral stalk is formed by the delta and b chains.

Its subcellular location is the cell inner membrane. It catalyses the reaction ATP + H2O + 4 H(+)(in) = ADP + phosphate + 5 H(+)(out). In terms of biological role, produces ATP from ADP in the presence of a proton gradient across the membrane. The catalytic sites are hosted primarily by the beta subunits. The chain is ATP synthase subunit beta from Burkholderia lata (strain ATCC 17760 / DSM 23089 / LMG 22485 / NCIMB 9086 / R18194 / 383).